The sequence spans 74 residues: Protein krueppel (74 aa).

C2H2-type zinc fingers lie at residues 1–4 (ERTH), 10–32 (FKCP…MRLH), 38–60 (YHCS…LRVH), and 66–74 (YTCEICKAK).

This sequence belongs to the krueppel C2H2-type zinc-finger protein family.

It localises to the nucleus. Functionally, krueppel is a gap class segmentation protein. The sequence is that of Protein krueppel (Kr) from Bradysia coprophila (Dark-winged fungus gnat).